The chain runs to 510 residues: GMP synthase [glutamine-hydrolyzing] (510 aa).

Residues 5–194 (DILVLDFGSQ…FAKICGCEST (190 aa)) enclose the Glutamine amidotransferase type-1 domain. The active-site Nucleophile is the cysteine 82. Active-site residues include histidine 169 and glutamate 171. The GMPS ATP-PPase domain occupies 195-385 (WNMGSFAKKE…LGLSRDIVYR (191 aa)). An ATP-binding site is contributed by 222 to 228 (SGGVDSS).

In terms of assembly, homodimer.

The enzyme catalyses XMP + L-glutamine + ATP + H2O = GMP + L-glutamate + AMP + diphosphate + 2 H(+). It functions in the pathway purine metabolism; GMP biosynthesis; GMP from XMP (L-Gln route): step 1/1. Functionally, catalyzes the synthesis of GMP from XMP. The polypeptide is GMP synthase [glutamine-hydrolyzing] (Campylobacter fetus subsp. fetus (strain 82-40)).